The primary structure comprises 145 residues: Extracellular globin-2 (145 aa).

Residues 3 to 145 (QCGVLEGLKV…HIEDGIKGHH (143 aa)) form the Globin domain. An intrachain disulfide couples cysteine 4 to cysteine 133. Histidine 96 is a heme b binding site.

The protein belongs to the globin family. In terms of assembly, the extracellular hemoglobin of the earthworm consists of 12 subunits that have a hexagonal bilayer structure with a molecular weight near 3.8 million. Each one-twelfth subunit is composed primarily of disulfide linked trimers (chains A, B, and C) and monomers (chain D).

In Lumbricus terrestris (Common earthworm), this protein is Extracellular globin-2.